Reading from the N-terminus, the 648-residue chain is Calpain-5 (648 aa).

The Calpain catalytic domain occupies Pro28 to Phe353. Residues Cys83, His252, and Asn290 contribute to the active site. The interval Asn354–Ser509 is domain III. Positions Ser502–Thr625 constitute a C2 domain.

The protein belongs to the peptidase C2 family. Ca(2+) is required as a cofactor. Expressed in neuronal, but not in GABA-ergic neurons, intestinal, hypodermal and excretory tissues.

Required for the correct female sexual development of the soma and germline in hermaphrodite animals, while being fully dispensable in males. Has calcium-dependent proteolytic activity and is involved in the cleavage of tra-2, for which it acts as a potentiator. Capable of calcium-dependent autolysis. Part of the necrosis cell death pathway. Required for necrosis of intestinal cells induced by B.thuringiensis endotoxin Cry6Aa. In Caenorhabditis elegans, this protein is Calpain-5.